The chain runs to 85 residues: Protein RnfH (85 aa).

It belongs to the UPF0125 (RnfH) family.

This is Protein RnfH from Cereibacter sphaeroides (strain ATCC 17023 / DSM 158 / JCM 6121 / CCUG 31486 / LMG 2827 / NBRC 12203 / NCIMB 8253 / ATH 2.4.1.) (Rhodobacter sphaeroides).